The following is a 272-amino-acid chain: Tryptophan synthase alpha chain (272 aa).

Active-site proton acceptor residues include glutamate 49 and aspartate 60.

This sequence belongs to the TrpA family. In terms of assembly, tetramer of two alpha and two beta chains.

It catalyses the reaction (1S,2R)-1-C-(indol-3-yl)glycerol 3-phosphate + L-serine = D-glyceraldehyde 3-phosphate + L-tryptophan + H2O. It participates in amino-acid biosynthesis; L-tryptophan biosynthesis; L-tryptophan from chorismate: step 5/5. Its function is as follows. The alpha subunit is responsible for the aldol cleavage of indoleglycerol phosphate to indole and glyceraldehyde 3-phosphate. This Polaromonas naphthalenivorans (strain CJ2) protein is Tryptophan synthase alpha chain.